We begin with the raw amino-acid sequence, 91 residues long: Defensin-like protein 269 (91 aa).

The first 25 residues, 1–25 (MAVSKTTMLIVLVAIILSCVSISNA), serve as a signal peptide directing secretion. Disulfide bonds link C41/C82, C53/C72, C59/C77, and C63/C79.

Belongs to the DEFL family.

The protein resides in the secreted. The sequence is that of Defensin-like protein 269 from Arabidopsis thaliana (Mouse-ear cress).